Consider the following 299-residue polypeptide: Craniofacial development protein 1 (299 aa).

2 stretches are compositionally biased toward acidic residues: residues M1 to Y18 and Y25 to E43. 2 disordered regions span residues M1 to K156 and F192 to M224. Basic residues predominate over residues Q49–Q65. Over residues L70–A94 the composition is skewed to acidic residues. A phosphoserine mark is found at S82, S85, and S86. Positions E95–E112 are enriched in basic and acidic residues. The residue at position 116 (S116) is a Phosphoserine. K150 is covalently cross-linked (Glycyl lysine isopeptide (Lys-Gly) (interchain with G-Cter in SUMO2)). The tract at residues V178–G217 is hydrophilic. Residues F192–P201 are compositionally biased toward basic and acidic residues. Phosphoserine is present on S216. Residues L218 to P299 form the BCNT-C domain. At K219 the chain carries N6-methyllysine. At S250 the chain carries Phosphoserine.

In terms of processing, phosphorylated by CK2 (casein kinase II) in vitro. Ubiquitous.

Its subcellular location is the chromosome. The protein resides in the centromere. The protein localises to the kinetochore. May play a role during embryogenesis. In Homo sapiens (Human), this protein is Craniofacial development protein 1 (CFDP1).